Reading from the N-terminus, the 183-residue chain is Alkyl hydroperoxide reductase AhpD (183 aa).

The active-site Proton donor is cysteine 132. A disulfide bridge links cysteine 132 with cysteine 135. Cysteine 135 functions as the Cysteine sulfenic acid (-SOH) intermediate in the catalytic mechanism.

It belongs to the AhpD family.

It carries out the reaction N(6)-[(R)-dihydrolipoyl]-L-lysyl-[lipoyl-carrier protein] + a hydroperoxide = N(6)-[(R)-lipoyl]-L-lysyl-[lipoyl-carrier protein] + an alcohol + H2O. Antioxidant protein with alkyl hydroperoxidase activity. Required for the reduction of the AhpC active site cysteine residues and for the regeneration of the AhpC enzyme activity. The sequence is that of Alkyl hydroperoxide reductase AhpD from Acidobacterium capsulatum (strain ATCC 51196 / DSM 11244 / BCRC 80197 / JCM 7670 / NBRC 15755 / NCIMB 13165 / 161).